The primary structure comprises 109 residues: Nucleoid-associated protein YbaB (109 aa).

The protein belongs to the YbaB/EbfC family. As to quaternary structure, homodimer.

It localises to the cytoplasm. The protein resides in the nucleoid. In terms of biological role, binds to DNA and alters its conformation. May be involved in regulation of gene expression, nucleoid organization and DNA protection. The chain is Nucleoid-associated protein YbaB from Escherichia coli O8 (strain IAI1).